The following is a 219-amino-acid chain: Rho-related protein racN (219 aa).

Position 12–19 (12–19) interacts with GTP; sequence GDVTIGKT. The Effector region signature appears at 33-41; sequence YIPTIFDNH. Residues 58–62 and 114–117 each bind GTP; these read DTGGG and TKTD. Cys-216 carries the cysteine methyl ester modification. Cys-216 is lipidated: S-geranylgeranyl cysteine. A propeptide spans 217–219 (removed in mature form); the sequence is IIC.

The protein belongs to the small GTPase superfamily. Rho family.

It localises to the cell membrane. This is Rho-related protein racN (racN) from Dictyostelium discoideum (Social amoeba).